A 103-amino-acid chain; its full sequence is Large ribosomal subunit protein bL21 (103 aa).

It belongs to the bacterial ribosomal protein bL21 family. Part of the 50S ribosomal subunit. Contacts protein L20.

In terms of biological role, this protein binds to 23S rRNA in the presence of protein L20. This Paraburkholderia phymatum (strain DSM 17167 / CIP 108236 / LMG 21445 / STM815) (Burkholderia phymatum) protein is Large ribosomal subunit protein bL21.